The following is a 367-amino-acid chain: tRNA/tmRNA (uracil-C(5))-methyltransferase (367 aa).

5 residues coordinate S-adenosyl-L-methionine: Gln-190, Tyr-218, Asn-223, Glu-239, and Asp-299. The active-site Nucleophile is the Cys-324. The active-site Proton acceptor is the Glu-358.

Belongs to the class I-like SAM-binding methyltransferase superfamily. RNA M5U methyltransferase family. TrmA subfamily.

The catalysed reaction is uridine(54) in tRNA + S-adenosyl-L-methionine = 5-methyluridine(54) in tRNA + S-adenosyl-L-homocysteine + H(+). It catalyses the reaction uridine(341) in tmRNA + S-adenosyl-L-methionine = 5-methyluridine(341) in tmRNA + S-adenosyl-L-homocysteine + H(+). In terms of biological role, dual-specificity methyltransferase that catalyzes the formation of 5-methyluridine at position 54 (m5U54) in all tRNAs, and that of position 341 (m5U341) in tmRNA (transfer-mRNA). The protein is tRNA/tmRNA (uracil-C(5))-methyltransferase of Pectobacterium carotovorum subsp. carotovorum (strain PC1).